Reading from the N-terminus, the 432-residue chain is Trigger factor (432 aa).

Residues 161–246 (EDRVTIDFTG…LKKVEERELP (86 aa)) enclose the PPIase FKBP-type domain.

It belongs to the FKBP-type PPIase family. Tig subfamily.

It is found in the cytoplasm. It carries out the reaction [protein]-peptidylproline (omega=180) = [protein]-peptidylproline (omega=0). Involved in protein export. Acts as a chaperone by maintaining the newly synthesized protein in an open conformation. Functions as a peptidyl-prolyl cis-trans isomerase. The protein is Trigger factor of Salmonella schwarzengrund (strain CVM19633).